We begin with the raw amino-acid sequence, 1905 residues long: Bromodomain adjacent to zinc finger domain protein 2A (1905 aa).

Disordered regions lie at residues 1 to 59 (MEME…NGLS) and 362 to 434 (TSIF…PTTS). Polar residues-rich tracts occupy residues 35-59 (TNGSPMNFPQQGKSLNGDVNVNGLS), 379-391 (LQDNSFDLNNGSD), and 399-420 (TQSSDFPPSLTQPAPDQSSTIQ). A Phosphothreonine modification is found at T507. S509 is subject to Phosphoserine. In terms of domain architecture, MBD spans 546 to 617 (IATPEEVRLP…EHFSFSPRMP (72 aa)). Position 548 is a phosphothreonine (T548). S613 is subject to Phosphoserine. Residues 648 to 792 (ITGKRGRPRN…KEKEEVTKAK (145 aa)) form a disordered region. DNA-binding regions (a.T hook) lie at residues 649–661 (TGKRGRPRNTEKA) and 670–682 (KRGRGRPPKVKIT). The span at 656–668 (RNTEKAKTKEVPK) shows a compositional bias: basic and acidic residues. The span at 669 to 678 (VKRGRGRPPK) shows a compositional bias: basic residues. N6-acetyllysine; by KAT8 is present on K680. Over residues 686–709 (NKTDNRPLKKLEAQETLNEEDKAK) the composition is skewed to basic and acidic residues. Residues 693 to 792 (LKKLEAQETL…KEKEEVTKAK (100 aa)) are a coiled coil. A compositionally biased stretch (basic residues) spans 710–721 (IAKSKKKMRQKV). The span at 725–734 (ECQTTIQGQA) shows a compositional bias: polar residues. Composition is skewed to basic and acidic residues over residues 739-748 (KQETKSLKQK) and 756-792 (AEKEKGKTKQEKLKEKVKREKKEKVKMKEKEEVTKAK). K799 is modified (N6-acetyllysine). Positions 848–913 (SGAFSDCLTI…LKAALHDPGF (66 aa)) constitute a DDT domain. K866 participates in a covalent cross-link: Glycyl lysine isopeptide (Lys-Gly) (interchain with G-Cter in SUMO2). S1051 is modified (phosphoserine). Glycyl lysine isopeptide (Lys-Gly) (interchain with G-Cter in SUMO2) cross-links involve residues K1150 and K1172. Disordered stretches follow at residues 1178 to 1220 (SNTT…PQAQ), 1283 to 1318 (LSSSVLTPDSSPGKLDPAPSQPPEEPEPDEAESSPD), and 1330 to 1412 (MPCN…RPPS). The residue at position 1184 (S1184) is a Phosphoserine. Positions 1186–1198 (ARARGRPRKTKPG) form a DNA-binding region, a.T hook 3. A compositionally biased stretch (low complexity) spans 1283–1293 (LSSSVLTPDSS). Over residues 1306-1315 (EEPEPDEAES) the composition is skewed to acidic residues. Polar residues predominate over residues 1345–1359 (DQPTPSPQQLASSKP). The residue at position 1397 (S1397) is a Phosphoserine. A DNA-binding region (a.T hook 4) is located at residues 1404–1416 (PKRRGRPPSKFFK). The residue at position 1559 (S1559) is a Phosphoserine. Residues K1676 and K1709 each participate in a glycyl lysine isopeptide (Lys-Gly) (interchain with G-Cter in SUMO2) cross-link. The segment at 1676-1726 (KVTCLVCRKGDNDEFLLLCDGCDRGCHIYCHRPKMEAVPEGDWFCTVCLAQ) adopts a PHD-type zinc-finger fold. Disordered stretches follow at residues 1734-1755 (QKPGFPKRGQKRKSGYSLNFSE) and 1769-1789 (ESPAAGPRYSEEGLSPSKRRR). Phosphoserine is present on residues S1747, S1770, S1783, and S1785. Residues 1793 to 1897 (RNHHSDLTFC…RFFESRWEEF (105 aa)) enclose the Bromo domain.

This sequence belongs to the WAL family. In terms of assembly, component of the NoRC-1 ISWI chromatin remodeling complex at least composed of SMARCA1 and BAZ2A/TIP5, which regulates the spacing of histone octamers on the DNA template to facilitate access to DNA. Within the NoRC-1 ISWI chromatin remodeling complex interacts with SMARCA1; the interaction is direct. Component of the NoRC-5 ISWI chromatin remodeling complex (also called the NoRC nucleolar-remodeling complex), at least composed of SMARCA5/SNF2H and BAZ2A/TIP5, which regulates the spacing of histone octamers on the DNA template to facilitate access to DNA. Within the NoRC-5 ISWI chromatin remodeling complexes interacts with SMARCA5/SNF2H; the interaction is direct. Interacts with TTF1; the interaction is required for recruitment of the NoRC-5 ISWI chromatin remodeling complex to rDNA. Interacts with HDAC1. Interacts with SIN3A. Interacts with DNMT1 and DNM3B. Interacts with BEND3 and USP21. Acetylation at Lys-680 by KAT8/MOF promotes its dissociation from pRNA, affecting heterochromatin formation, nucleosome positioning and rDNA silencing. Deacetylation by SIRT1 in late S phase enhances pRNA-binding, allowing de novo DNA methylation and heterochromatin formation. Acetylation is high during S phase and declines to background levels in late S phase when the silent copies of rRNA genes are replicated. Post-translationally, ubiquitinated. Deubiquitinated by USP21 leading to its stabilization. In terms of tissue distribution, expressed at moderate levels in most tissues analyzed, including heart, brain, placenta, lung, skeletal muscle, kidney and pancreas.

It is found in the nucleus. The protein resides in the nucleolus. Its function is as follows. Regulatory subunit of the ATP-dependent NoRC-1 and NoRC-5 ISWI chromatin remodeling complexes, which form ordered nucleosome arrays on chromatin and facilitate access to DNA during DNA-templated processes such as DNA replication, transcription, and repair. Both complexes regulate the spacing of nucleosomes along the chromatin and have the ability to slide mononucleosomes to the center of a DNA template. Directly stimulates the ATPase activity of SMARCA5 in the NoRC-5 ISWI chromatin remodeling complex. The NoRC-1 ISWI chromatin remodeling complex has a lower ATP hydrolysis rate than the NoRC-5 ISWI chromatin remodeling complex. Within the NoRC-5 ISWI chromatin remodeling complex, mediates silencing of a fraction of rDNA by recruiting histone-modifying enzymes and DNA methyltransferases, leading to heterochromatin formation and transcriptional silencing. In the complex, it plays a central role by being recruited to rDNA and by targeting chromatin modifying enzymes such as HDAC1, leading to repress RNA polymerase I transcription. Recruited to rDNA via its interaction with TTF1 and its ability to recognize and bind histone H4 acetylated on 'Lys-16' (H4K16ac), leading to deacetylation of H4K5ac, H4K8ac, H4K12ac but not H4K16ac. Specifically binds pRNAs, 150-250 nucleotide RNAs that are complementary in sequence to the rDNA promoter; pRNA-binding is required for heterochromatin formation and rDNA silencing. This chain is Bromodomain adjacent to zinc finger domain protein 2A (BAZ2A), found in Homo sapiens (Human).